Here is a 224-residue protein sequence, read N- to C-terminus: Zinc finger C4H2 domain-containing protein (224 aa).

Positions glutamate 12–leucine 97 form a coiled coil. 2 disordered regions span residues glutamine 166–proline 185 and proline 204–glutamate 224. A C4H2-type zinc finger spans residues cysteine 189–cysteine 206. Basic residues predominate over residues alanine 208–glutamate 224.

It is found in the nucleus. Its subcellular location is the cytoplasm. It localises to the postsynaptic cell membrane. Functionally, plays a role in GABAergic and V2 interneurons differentiation. Involved in motoneuron development and in neuromuscular junction formation. This is Zinc finger C4H2 domain-containing protein (zc4h2) from Danio rerio (Zebrafish).